The following is a 476-amino-acid chain: MNYFPVFADLNNRPVLVVGGGTIAARKVNLLLKANAEVRITAQKLNAELTALVEQDRIIWIAKEFHGEQIRNVFLVVAATDDEQLNEQVFQVAESRQKLVNVVDDQARCSFIFPSIIDRSPIQVAVSSGGAAPVLARLLREKLEALLPQHLGVMADISGKWRHKVKQQLKTITERRRFWESLFNGRFSRLLKNRQIEAAKKELELQLTKDYQGGSVSLVGAGPGDAGLLTLKGLQEIQQADVVLYDALVSAEILDLVRRDAELIFVGKRAQGRQVAQQETNQLLADLALQGKRVVRLKGGDPFVFGRGGEELEVLAQQGIPFSVVPGITAAIGATAYAGIPLTHRDYAQSAVFVTGHRKADASDIEWQTLARSNQTLVIYMGTLKAATIAQSLQQYGRAASTPVAVISQGTQETQHTQIGTLKNLAELAEKAPTPALIVVGEVVSLHEKLAWFGEDKFAQKRPHFTLDSLRIERVA.

The interval M1–L203 is precorrin-2 dehydrogenase /sirohydrochlorin ferrochelatase. Residues T22–I23 and Q43–K44 each bind NAD(+). Phosphoserine is present on S128. The tract at residues G214–A476 is uroporphyrinogen-III C-methyltransferase. S-adenosyl-L-methionine is bound at residue P223. The active-site Proton acceptor is D246. K268 (proton donor) is an active-site residue. S-adenosyl-L-methionine is bound by residues G299–D301, V304, T329–A330, M381, and G410.

It in the N-terminal section; belongs to the precorrin-2 dehydrogenase / sirohydrochlorin ferrochelatase family. In the C-terminal section; belongs to the precorrin methyltransferase family.

The catalysed reaction is uroporphyrinogen III + 2 S-adenosyl-L-methionine = precorrin-2 + 2 S-adenosyl-L-homocysteine + H(+). It carries out the reaction precorrin-2 + NAD(+) = sirohydrochlorin + NADH + 2 H(+). It catalyses the reaction siroheme + 2 H(+) = sirohydrochlorin + Fe(2+). The protein operates within cofactor biosynthesis; adenosylcobalamin biosynthesis; precorrin-2 from uroporphyrinogen III: step 1/1. Its pathway is cofactor biosynthesis; adenosylcobalamin biosynthesis; sirohydrochlorin from precorrin-2: step 1/1. It functions in the pathway porphyrin-containing compound metabolism; siroheme biosynthesis; precorrin-2 from uroporphyrinogen III: step 1/1. It participates in porphyrin-containing compound metabolism; siroheme biosynthesis; siroheme from sirohydrochlorin: step 1/1. The protein operates within porphyrin-containing compound metabolism; siroheme biosynthesis; sirohydrochlorin from precorrin-2: step 1/1. In terms of biological role, multifunctional enzyme that catalyzes the SAM-dependent methylations of uroporphyrinogen III at position C-2 and C-7 to form precorrin-2 via precorrin-1. Then it catalyzes the NAD-dependent ring dehydrogenation of precorrin-2 to yield sirohydrochlorin. Finally, it catalyzes the ferrochelation of sirohydrochlorin to yield siroheme. The polypeptide is Siroheme synthase (Mannheimia succiniciproducens (strain KCTC 0769BP / MBEL55E)).